The primary structure comprises 316 residues: PAK4-inhibitor inka2 (316 aa).

2 disordered regions span residues 43–74 (RSSP…SHRT) and 108–130 (YSEV…ESET). Residues 65–74 (RRDNRISHRT) are compositionally biased toward basic and acidic residues. Residues 119-129 (EEDDIVEEESE) show a composition bias toward acidic residues. The tract at residues 182 to 219 (DSQDWTGCLLSQSRSRQPLVLGDNSFADLVKQWMDLPE) is inka box.

It belongs to the INKA family.

It is found in the nucleus. In terms of biological role, inhibitor of the serine/threonine-protein kinase pak4/pak5. Acts by binding pak4/pak5 in a substrate-like manner, inhibiting the protein kinase activity. In Xenopus laevis (African clawed frog), this protein is PAK4-inhibitor inka2.